We begin with the raw amino-acid sequence, 425 residues long: Serine--tRNA ligase (425 aa).

231 to 233 (TAE) contributes to the L-serine binding site. 262–264 (RSE) is an ATP binding site. Glu-285 serves as a coordination point for L-serine. 349 to 352 (EISS) serves as a coordination point for ATP. Ser-385 serves as a coordination point for L-serine.

The protein belongs to the class-II aminoacyl-tRNA synthetase family. Type-1 seryl-tRNA synthetase subfamily. In terms of assembly, homodimer. The tRNA molecule binds across the dimer.

Its subcellular location is the cytoplasm. The enzyme catalyses tRNA(Ser) + L-serine + ATP = L-seryl-tRNA(Ser) + AMP + diphosphate + H(+). The catalysed reaction is tRNA(Sec) + L-serine + ATP = L-seryl-tRNA(Sec) + AMP + diphosphate + H(+). The protein operates within aminoacyl-tRNA biosynthesis; selenocysteinyl-tRNA(Sec) biosynthesis; L-seryl-tRNA(Sec) from L-serine and tRNA(Sec): step 1/1. Catalyzes the attachment of serine to tRNA(Ser). Is also able to aminoacylate tRNA(Sec) with serine, to form the misacylated tRNA L-seryl-tRNA(Sec), which will be further converted into selenocysteinyl-tRNA(Sec). The sequence is that of Serine--tRNA ligase from Bacillus licheniformis (strain ATCC 14580 / DSM 13 / JCM 2505 / CCUG 7422 / NBRC 12200 / NCIMB 9375 / NCTC 10341 / NRRL NRS-1264 / Gibson 46).